Consider the following 151-residue polypeptide: Small heat shock protein HspH (151 aa).

Residues 28–138 (RAGEDNYPPY…KPRRIAINAA (111 aa)) enclose the sHSP domain.

It belongs to the small heat shock protein (HSP20) family.

The chain is Small heat shock protein HspH (hspH) from Bradyrhizobium diazoefficiens (strain JCM 10833 / BCRC 13528 / IAM 13628 / NBRC 14792 / USDA 110).